Reading from the N-terminus, the 80-residue chain is Cell division protein ZapB (80 aa).

Positions 3–80 (FEVFEKLEAK…ALLGKMEDVQ (78 aa)) form a coiled coil.

It belongs to the ZapB family. Homodimer. The ends of the coiled-coil dimer bind to each other, forming polymers. Interacts with FtsZ.

Its subcellular location is the cytoplasm. In terms of biological role, non-essential, abundant cell division factor that is required for proper Z-ring formation. It is recruited early to the divisome by direct interaction with FtsZ, stimulating Z-ring assembly and thereby promoting cell division earlier in the cell cycle. Its recruitment to the Z-ring requires functional FtsA or ZipA. This is Cell division protein ZapB from Photorhabdus laumondii subsp. laumondii (strain DSM 15139 / CIP 105565 / TT01) (Photorhabdus luminescens subsp. laumondii).